The following is a 361-amino-acid chain: Peptide chain release factor 1 (361 aa).

The residue at position 235 (Gln235) is an N5-methylglutamine.

Belongs to the prokaryotic/mitochondrial release factor family. Post-translationally, methylated by PrmC. Methylation increases the termination efficiency of RF1.

It localises to the cytoplasm. Its function is as follows. Peptide chain release factor 1 directs the termination of translation in response to the peptide chain termination codons UAG and UAA. This is Peptide chain release factor 1 from Xanthomonas oryzae pv. oryzae (strain MAFF 311018).